We begin with the raw amino-acid sequence, 838 residues long: G-protein coupled receptor-associated sorting protein 2 (838 aa).

Disordered stretches follow at residues 1-122 (MTGA…GARP), 218-292 (ASNE…SNPF), 349-368 (RFRHRDKEDPNTALKLRAQK), and 531-552 (LELSPEGEEQESLLQPDQPSPE). Basic and acidic residues predominate over residues 13 to 31 (KPEKKAGEEVIAGPEREND). A compositionally biased stretch (polar residues) spans 220–245 (NESGFWSADETSTASSFWTGEETSVR). The segment covering 255–271 (RSRHRAKHQTNPRSRPR) has biased composition (basic residues). Phosphoserine is present on residues serine 282 and serine 284. Polar residues predominate over residues 542 to 552 (SLLQPDQPSPE).

This sequence belongs to the GPRASP family. Interacts with cytoplasmic tails of a variety of G-protein coupled receptors such as muscarinic acetylcholine receptor M1/CHRM1 and calcitonin receptor/CALCR. As to expression, expressed in the brain.

May play a role in regulation of a variety of G-protein coupled receptors. The polypeptide is G-protein coupled receptor-associated sorting protein 2 (GPRASP2) (Homo sapiens (Human)).